Consider the following 657-residue polypeptide: C4-dicarboxylate transport sensor protein DctS (657 aa).

Residues 1–26 are Cytoplasmic-facing; the sequence is MRDTTGGPAGAEVWTVPGLLGARKLD. The helical transmembrane segment at 27–51 threads the bilayer; the sequence is LLALIPLVAIVALMTLVGALLFAVA. Over 52–252 the chain is Periplasmic; the sequence is QSDANRARAK…AYDAPDAFGN (201 aa). The chain crosses the membrane as a helical span at residues 253 to 273; the sequence is AALLAAIGALSVFAVLAMVVL. Residues 274–657 lie on the Cytoplasmic side of the membrane; the sequence is HRNALRRRMA…LPVPQEGAPA (384 aa). In terms of domain architecture, PAS spans 289 to 361; that stretch reads AEMAFRRAME…ARQRQLIEGQ (73 aa). The PAC domain maps to 365-417; that stretch reads QAFETRFRRSDGSEIEVQVFEAPLIDAGGRHRGWMGSVIDITQAKQAARLARA. Residues 407–422 form an inter-domain linker region; it reads QAKQAARLARAQDESL. Positions 437 to 652 constitute a Histidine kinase domain; that stretch reads TLAHELNQPL…VFTVTLPVPQ (216 aa). A Phosphohistidine; by autocatalysis modification is found at H440.

It is found in the cell inner membrane. It carries out the reaction ATP + protein L-histidine = ADP + protein N-phospho-L-histidine.. In terms of biological role, member of the two-component regulatory system DctS/DctR involved in the transport of C4-dicarboxylates. DctS functions as a membrane-associated protein kinase that phosphorylates DctR in response to environmental signals. The sequence is that of C4-dicarboxylate transport sensor protein DctS (dctS) from Rhodobacter capsulatus (Rhodopseudomonas capsulata).